The sequence spans 647 residues: RAF proto-oncogene serine/threonine-protein kinase (647 aa).

Residue serine 43 is modified to Phosphoserine. Residues 56–131 (NTIRVFLPNK…IGEELQVDFL (76 aa)) enclose the RBD domain. The segment at 138-184 (THNFARKTFLKLAFCDICQKFLLNGFRCQTCGYKFHEHCSTKVPTMC) adopts a Phorbol-ester/DAG-type zinc-finger fold. 2 disordered regions span residues 236-269 (HVFT…VSTT) and 284-334 (HSES…RPRG). Residues 239-269 (TFNTSNPSSEGTLSQRQRSTSTPNVHMVSTT) are compositionally biased toward polar residues. A Phosphoserine modification is found at serine 259. Residue threonine 268 is modified to Phosphothreonine; by autocatalysis. A compositionally biased stretch (low complexity) spans 286–297 (ESASPSALSGSP). The segment covering 298 to 309 (NNMSPTGWSQPK) has biased composition (polar residues). Serine 338 bears the Phosphoserine mark. A Protein kinase domain is found at 349–609 (VMLSTRIGSG…PQILSSIELL (261 aa)). ATP is bound by residues 355–363 (IGSGSFGTV) and lysine 375. Catalysis depends on aspartate 468, which acts as the Proton acceptor. Residues serine 499 and serine 621 each carry the phosphoserine modification.

The protein belongs to the protein kinase superfamily. TKL Ser/Thr protein kinase family. RAF subfamily. Phosphorylation at Ser-259 inactivates kinase activity. Dephosphorylation of Ser-259 by a complex containing protein phosphatase 1 relieves inactivation, leading to stimulate RAF1 activity. In terms of tissue distribution, isoform 1 was present in all tissues tested: skeletal muscle, intestine, brain, gizzard, heart, lung, kidney, bone marrow, spleen and bursa of Fabricius. Isoform 2 was only detected in brain, heart and skeletal muscle. In brain and heart isoform 1 is more abundant than isoform 2. In skeletal muscle isoform 2 is more abundant than isoform 1.

It is found in the cytoplasm. The protein resides in the cell membrane. It catalyses the reaction L-seryl-[protein] + ATP = O-phospho-L-seryl-[protein] + ADP + H(+). The enzyme catalyses L-threonyl-[protein] + ATP = O-phospho-L-threonyl-[protein] + ADP + H(+). Its function is as follows. Serine/threonine-protein kinase that acts as a regulatory link between the membrane-associated Ras GTPases and the MAPK/ERK cascade, and this critical regulatory link functions as a switch determining cell fate decisions. RAF1 activation initiates a mitogen-activated protein kinase (MAPK) cascade that comprises a sequential phosphorylation of the dual-specific MAPK kinases (MAP2K1/MEK1 and MAP2K2/MEK2) and the extracellular signal-regulated kinases (MAPK3/ERK1 and MAPK1/ERK2). This chain is RAF proto-oncogene serine/threonine-protein kinase (RAF1), found in Gallus gallus (Chicken).